Consider the following 303-residue polypeptide: MTNTTMQPNRLRIALQRKGRLSQDCAILLKQCGVKINWNEQRLIAYAENLPIEILRVRDDDIPGLIFDGVVDLGIIGENVLEEEELGRRAANETVTYKKLCQLDFGDCRLSLAVDRDCHYENVKDLANRRIATSYPHLLKRYMNENGVSFKSCLLNGSVEVAPSAGIAYAICDLVSSGATLEANGLKEVDVIYRSKACLIQRAEPLESTKQALVDKLLTRIQGVQQAAESKYIMLHAPKEKLEKITALLPGVENPTILPLATDTTRVAMHVVSQENLFWETMEQLKEAGASSILVLPIEKMME.

The protein belongs to the ATP phosphoribosyltransferase family. Long subfamily. Mg(2+) is required as a cofactor.

Its subcellular location is the cytoplasm. The enzyme catalyses 1-(5-phospho-beta-D-ribosyl)-ATP + diphosphate = 5-phospho-alpha-D-ribose 1-diphosphate + ATP. It functions in the pathway amino-acid biosynthesis; L-histidine biosynthesis; L-histidine from 5-phospho-alpha-D-ribose 1-diphosphate: step 1/9. With respect to regulation, feedback inhibited by histidine. In terms of biological role, catalyzes the condensation of ATP and 5-phosphoribose 1-diphosphate to form N'-(5'-phosphoribosyl)-ATP (PR-ATP). Has a crucial role in the pathway because the rate of histidine biosynthesis seems to be controlled primarily by regulation of HisG enzymatic activity. The protein is ATP phosphoribosyltransferase of Haemophilus influenzae (strain PittGG).